Here is a 261-residue protein sequence, read N- to C-terminus: 14-3-3-like protein A (261 aa).

The protein belongs to the 14-3-3 family.

In Vicia faba (Broad bean), this protein is 14-3-3-like protein A.